A 137-amino-acid polypeptide reads, in one-letter code: Peptide methionine sulfoxide reductase MsrB (137 aa).

The region spanning 7–129 (PTENIEKLTD…NSASLNFVDD (123 aa)) is the MsrB domain. The Zn(2+) site is built by Cys46, Cys49, Cys95, and Cys98. The active-site Nucleophile is the Cys118.

It belongs to the MsrB Met sulfoxide reductase family. The cofactor is Zn(2+).

It catalyses the reaction L-methionyl-[protein] + [thioredoxin]-disulfide + H2O = L-methionyl-(R)-S-oxide-[protein] + [thioredoxin]-dithiol. This is Peptide methionine sulfoxide reductase MsrB from Yersinia enterocolitica serotype O:8 / biotype 1B (strain NCTC 13174 / 8081).